We begin with the raw amino-acid sequence, 552 residues long: Two-component response regulator ARR10 (552 aa).

One can recognise a Response regulatory domain in the interval 18–133; that stretch reads RVLAVDDDQT…ELKNIWQHVV (116 aa). Aspartate 69 carries the post-translational modification 4-aspartylphosphate. The disordered stretch occupies residues 139–181; it reads KKNKSNVSNGSGNCDKANRKRKEQYEEEEEEERGNDNDDPTAQ. Residues 151–173 are a coiled coil; that stretch reads NCDKANRKRKEQYEEEEEEERGN. The span at 163-177 shows a compositional bias: acidic residues; that stretch reads YEEEEEEERGNDNDD. Positions 182–185 match the Nuclear localization signal motif; the sequence is KKPR. The myb-like GARP DNA-binding region spans 185 to 235; it reads RVLWTHELHNKFLAAVDHLGVERAVPKKILDLMNVDKLTRENVASHLQKFR.

The protein belongs to the ARR family. Type-B subfamily. In terms of assembly, binds the target DNA as a monomer. In terms of processing, two-component system major event consists of a His-to-Asp phosphorelay between a sensor histidine kinase (HK) and a response regulator (RR). In plants, the His-to-Asp phosphorelay involves an additional intermediate named Histidine-containing phosphotransfer protein (HPt). This multistep phosphorelay consists of a His-Asp-His-Asp sequential transfer of a phosphate group between first a His and an Asp of the HK protein, followed by the transfer to a conserved His of the HPt protein and finally the transfer to an Asp in the receiver domain of the RR protein. As to expression, detected in the whole plant. Predominantly expressed in roots and leaves.

The protein localises to the nucleus. Functionally, transcriptional activator that binds specifically to the DNA sequence 5'-[AG]GATT-3'. Functions as a response regulator involved in His-to-Asp phosphorelay signal transduction system. Phosphorylation of the Asp residue in the receiver domain activates the ability of the protein to promote the transcription of target genes. Could directly activate some type-A response regulators in response to cytokinins. The chain is Two-component response regulator ARR10 (ARR10) from Arabidopsis thaliana (Mouse-ear cress).